Consider the following 566-residue polypeptide: Oxygen-dependent choline dehydrogenase (566 aa).

7–36 (DYIICGAGSAGNVLATRLTEDPDVTVLLLE) is an FAD binding site. Residues 180–202 (NGYQQEGFGPMDRTVTPKGRRAS) form a disordered region. His-474 functions as the Proton acceptor in the catalytic mechanism.

It belongs to the GMC oxidoreductase family. FAD serves as cofactor.

It catalyses the reaction choline + A = betaine aldehyde + AH2. It carries out the reaction betaine aldehyde + NAD(+) + H2O = glycine betaine + NADH + 2 H(+). It functions in the pathway amine and polyamine biosynthesis; betaine biosynthesis via choline pathway; betaine aldehyde from choline (cytochrome c reductase route): step 1/1. In terms of biological role, involved in the biosynthesis of the osmoprotectant glycine betaine. Catalyzes the oxidation of choline to betaine aldehyde and betaine aldehyde to glycine betaine at the same rate. The chain is Oxygen-dependent choline dehydrogenase from Burkholderia orbicola (strain MC0-3).